The following is a 255-amino-acid chain: Transmembrane protein 81 (255 aa).

A signal peptide spans 1 to 30; that stretch reads MKVLATSFVLGSLGLAFYLPLVVTTPKTLA. At 31 to 226 the chain is on the extracellular side; sequence IPEKLQEAVG…HPKWKKKVAS (196 aa). N-linked (GlcNAc...) asparagine glycosylation occurs at Asn45. One can recognise an Ig-like domain in the interval 83-171; it reads TNWICGMLHF…VQLVKNLRLV (89 aa). Cys104 and Cys160 form a disulfide bridge. A helical transmembrane segment spans residues 227-247; that stretch reads ALGIGIAIGVVGGVLVRIVLC. The Cytoplasmic segment spans residues 248-255; that stretch reads ALRGGLQQ.

In terms of assembly, forms a complex with IZUMO1 and SPACA6 on spermatocyte cell membrane required for fertilization. Highly expressed in sperm (at protein level).

It is found in the cell membrane. In terms of biological role, essential fertilization factor required for male fertility. Part of a conserved trimeric sperm complex with the essential fertilization factors IZUMO1 and SPACA6 which bridges sperm and oocyte membranes during fertilization by binding to IZUMO1R/JUNO on the oocyte. The polypeptide is Transmembrane protein 81 (Homo sapiens (Human)).